The primary structure comprises 530 residues: MSLLNCENSCASSQSSSDCCAAMANSCSAAMKDDSVSGCVSTGNLSSSFMEEIQGYDVEFDPPLESKYECPICLMALREAVQTPCGHRFCKACITKSIRDAGHKCPVDNEILLENQLFPDNFAKREILSLTVKCPNKGCVQKMELRHLEDHQVHCEFALVICPQCQRFFQKCQINKHIIEDCPRRQVSCVNCAVPMPYEEKEIHDQSCPLANIICEYCGTILIREQMPNHYDLDCPTAPVPCTFSVFGCHEKMQRNHLARHLQENTQLHMRLLAQAVHNVNLSLRPCDASSPSRGCRPEDPNYEETVKQLEGRLVRQDHQIRELTAKMETQSMHVSELKRTIRSLEDKVAEMEAQQCNGIYIWKIGNFGMHLKSQEEERPVVIHSPGFYTGRPGYKLCMRLHLQLPTAQRCANYISLFVHTMQGEYDSHLPWPFQGTIRLTILDQSEAVIRQNHEEVMDAKPELLAFQRPTIPRNPKGFGYVTFMHLEALRQGTFIKDDTLLVRCEVSTRFDMGGLRKEGFQPRSTDAGV.

The tract at residues 1-362 (MSLLNCENSC…EAQQCNGIYI (362 aa)) is interaction with TAX1BP1. The RING-type; degenerate zinc finger occupies 70–109 (CPICLMALREAVQTPCGHRFCKACITKSIRDAGHKCPVDN). Lys-124 participates in a covalent cross-link: Glycyl lysine isopeptide (Lys-Gly) (interchain with G-Cter in SUMO); alternate. Lys-124 is covalently cross-linked (Glycyl lysine isopeptide (Lys-Gly) (interchain with G-Cter in ubiquitin); alternate). Lys-142 participates in a covalent cross-link: Glycyl lysine isopeptide (Lys-Gly) (interchain with G-Cter in SUMO). 2 consecutive TRAF-type zinc fingers follow at residues 150–202 (DHQV…EEKE) and 203–259 (IHDQ…NHLA). A coiled-coil region spans residues 302 to 356 (NYEETVKQLEGRLVRQDHQIRELTAKMETQSMHVSELKRTIRSLEDKVAEMEAQQ). Lys-327 is covalently cross-linked (Glycyl lysine isopeptide (Lys-Gly) (interchain with G-Cter in ubiquitin)). The MATH domain maps to 358–507 (NGIYIWKIGN…DDTLLVRCEV (150 aa)). An interaction with TANK region spans residues 363–530 (WKIGNFGMHL…FQPRSTDAGV (168 aa)). Residue Lys-461 forms a Glycyl lysine isopeptide (Lys-Gly) (interchain with G-Cter in SUMO) linkage.

The protein belongs to the TNF receptor-associated factor family. A subfamily. As to quaternary structure, homotrimer. Homooligomer. N-terminal region is dimeric while C-terminal region is trimeric; maybe providing a mode of oligomerization. Upon IL1B treatment, forms a complex with PELI1, IRAK1, IRAK4 and MYD88; this complex recruits MAP3K7/TAK1, TAB1 and TAB2 to mediate NF-kappa-B activation. Direct binding of SMAD6 to PELI1 prevents the complex formation and hence negatively regulates IL1R-TLR signaling and eventually NF-kappa-B-mediated gene expression. Binds to TNFRSF5/CD40 and TNFRSF11A/RANK. Associates with NGFR, TNFRSF17, IRAK2, IRAK3, RIPK2, MAP3K1, MAP3K5, MAP3K14, CSK, TRAF, TRAF-interacting protein TRIP and TNF receptor associated protein TDP2. Interacts with IL17R. Interacts with SQSTM1 bridging NTRK1 and NGFR. Forms a ternary complex with SQSTM1 and PRKCZ. Interacts with PELI2 and PELI3. Binds UBE2V1. Interacts with TAX1BP1; this interaction mediates deubiquitination of TRAF6 and inhibition of NF-kappa-B activation. Interacts with ZNF675. Interacts with ARRB1 and ARRB2. Interacts with MAP3K7 and TAB1/MAP3K7IP1; during IL-1 signaling. Interacts with UBE2N. Interacts with TGFBR1, HDAC1 and RANGAP1. Interacts with AKT1, AKT2 and AKT3. Interacts (via TRAF domains) with NUMBL (via C-terminal). Interacts with RBCK1. Interacts with LIMD1 (via LIM domains). Interacts with RSAD2/viperin. Interacts (via C-terminus) with EIF2AK2/PKR (via the kinase catalytic domain). Interacts with ZFAND5. Interacts with IL1RL1. Interacts with TRAFD1. Interacts with AJUBA. Interacts with MAVS/IPS1. Interacts (via TRAF domains) with DYNC2I2 (via WD domains). Interacts with IFIT3 (via N-terminus). Interacts with TICAM2. Interacts with CARD14. Interacts with CD40 and MAP3K8; the interaction is required for ERK activation. Interacts with TICAM1 and this interaction is enhanced in the presence of WDFY1. Interacts with TANK; this interaction increases in response to DNA damage. Interacts with USP10; this interaction increases in response to DNA damage. Interacts with ZC3H12A; this interaction increases in response to DNA damage and is stimulated by TANK. Interacts with WDFY3. Interacts with TRIM13. Interacts with GPS2. Interacts (via C-terminus) with SASH1. Interacts with LRRC19. Interacts with IL17RA and TRAF3IP2. Interacts with TOMM70. Interacts with AMBRA1; interaction is required to mediate 'Lys-63'-linked ubiquitination of ULK1. Interacts with CRBN; this interaction inhibits TLR4-mediated signaling by preventing TRAF6-mediated ubiquitination of ECSIT. In terms of processing, sumoylated on Lys-124, Lys-142 and Lys-461 with SUMO1. Polyubiquitinated on Lys-124 by TRAF3IP2; after cell stimulation with IL17A. Polyubiquitinated; after cell stimulation with IL1B or TGFB. This ligand-induced cell stimulation leads to dimerization/oligomerization of TRAF6 molecules, followed by auto-ubiquitination which involves UBE2N and UBE2V1 and leads to TRAF6 activation. This 'Lys-63' site-specific poly-ubiquitination appears to be associated with the activation of signaling molecules. Endogenous autoubiquitination occurs only for the cytoplasmic form. Deubiquitinated by USP10 in a TANK-dependent manner, leading to the negative regulation of NF-kappa-B signaling upon DNA damage. LRRC19 induces 'Lys-63' ubiquitination. Ubiquitinated at Lys-327 by the SCF(FBXL2) complex, leading to its degradation by the proteasome.

It localises to the cytoplasm. The protein localises to the cell cortex. It is found in the nucleus. Its subcellular location is the lipid droplet. It carries out the reaction S-ubiquitinyl-[E2 ubiquitin-conjugating enzyme]-L-cysteine + [acceptor protein]-L-lysine = [E2 ubiquitin-conjugating enzyme]-L-cysteine + N(6)-ubiquitinyl-[acceptor protein]-L-lysine.. The protein operates within protein modification; protein ubiquitination. Its function is as follows. E3 ubiquitin ligase that, together with UBE2N and UBE2V1, mediates the synthesis of 'Lys-63'-linked-polyubiquitin chains conjugated to proteins, such as ECSIT, IKBKG, IRAK1, AKT1 and AKT2. Also mediates ubiquitination of free/unanchored polyubiquitin chain that leads to MAP3K7 activation. Leads to the activation of NF-kappa-B and JUN. Seems to also play a role in dendritic cells (DCs) maturation and/or activation. Represses c-Myb-mediated transactivation, in B-lymphocytes. Adapter protein that seems to play a role in signal transduction initiated via TNF receptor, IL-1 receptor and IL-17 receptor. Regulates osteoclast differentiation by mediating the activation of adapter protein complex 1 (AP-1) and NF-kappa-B, in response to RANK-L stimulation. Together with MAP3K8, mediates CD40 signals that activate ERK in B-cells and macrophages, and thus may play a role in the regulation of immunoglobulin production. Acts as a regulator of the JNK and NF-kappa-B signaling pathways by initiating assembly of heterotypic 'Lys-63'-/'Lys-48'-linked branched ubiquitin chains that are then recognized by TAB2: TRAF6 catalyzes initial 'Lys-63'-linked-polyubiquitin chains that are then branched via 'Lys-48'-linked polyubiquitin by HUWE1. 'Lys-63'-/'Lys-48'-linked branched ubiquitin chains protect 'Lys-63'-linkages from CYLD deubiquitination. Also participates in the TCR signaling by ubiquitinating LAT. In Rattus norvegicus (Rat), this protein is TNF receptor-associated factor 6 (Traf6).